A 308-amino-acid chain; its full sequence is Ribose 1,5-bisphosphate isomerase (308 aa).

Substrate contacts are provided by residues 24–27 (RGAG) and arginine 67. The Proton acceptor role is filled by cysteine 129. Aspartate 198 acts as the Proton donor in catalysis. Substrate-binding positions include 208–209 (NK) and lysine 234.

This sequence belongs to the eIF-2B alpha/beta/delta subunits family. R15P isomerase subfamily.

The catalysed reaction is alpha-D-ribose 1,5-bisphosphate = D-ribulose 1,5-bisphosphate. In terms of biological role, catalyzes the isomerization of ribose 1,5-bisphosphate (R15P) to ribulose 1,5-bisphosphate (RuBP), the CO(2) acceptor and substrate for RubisCO. Functions in an archaeal AMP degradation pathway, together with AMP phosphorylase and RubisCO. The polypeptide is Ribose 1,5-bisphosphate isomerase (Methanocaldococcus jannaschii (strain ATCC 43067 / DSM 2661 / JAL-1 / JCM 10045 / NBRC 100440) (Methanococcus jannaschii)).